The sequence spans 232 residues: Ribose-5-phosphate isomerase A (232 aa).

Substrate-binding positions include 28 to 31 (TGST), 83 to 86 (DGAD), and 96 to 99 (KGGG). E105 (proton acceptor) is an active-site residue. K123 contributes to the substrate binding site.

This sequence belongs to the ribose 5-phosphate isomerase family. In terms of assembly, homodimer.

The catalysed reaction is aldehydo-D-ribose 5-phosphate = D-ribulose 5-phosphate. Its pathway is carbohydrate degradation; pentose phosphate pathway; D-ribose 5-phosphate from D-ribulose 5-phosphate (non-oxidative stage): step 1/1. Functionally, catalyzes the reversible conversion of ribose-5-phosphate to ribulose 5-phosphate. This chain is Ribose-5-phosphate isomerase A, found in Rhizobium leguminosarum bv. trifolii (strain WSM2304).